Consider the following 178-residue polypeptide: NAD(P)H-quinone oxidoreductase subunit J (178 aa).

It belongs to the complex I 30 kDa subunit family. NDH-1 can be composed of about 15 different subunits; different subcomplexes with different compositions have been identified which probably have different functions.

It localises to the cellular thylakoid membrane. It carries out the reaction a plastoquinone + NADH + (n+1) H(+)(in) = a plastoquinol + NAD(+) + n H(+)(out). It catalyses the reaction a plastoquinone + NADPH + (n+1) H(+)(in) = a plastoquinol + NADP(+) + n H(+)(out). Its function is as follows. NDH-1 shuttles electrons from an unknown electron donor, via FMN and iron-sulfur (Fe-S) centers, to quinones in the respiratory and/or the photosynthetic chain. The immediate electron acceptor for the enzyme in this species is believed to be plastoquinone. Couples the redox reaction to proton translocation, and thus conserves the redox energy in a proton gradient. Cyanobacterial NDH-1 also plays a role in inorganic carbon-concentration. The polypeptide is NAD(P)H-quinone oxidoreductase subunit J (Crocosphaera subtropica (strain ATCC 51142 / BH68) (Cyanothece sp. (strain ATCC 51142))).